Reading from the N-terminus, the 295-residue chain is Tissue factor (295 aa).

The first 28 residues, 1–28, serve as a signal peptide directing secretion; it reads MAIPMRPRLLAALAPTFLGFLLLQVAVG. At 29–252 the chain is on the extracellular side; it reads AGTPPGKAFN…TEQWKSVLGE (224 aa). 2 N-linked (GlcNAc...) asparagine glycosylation sites follow: N38 and N58. A disulfide bridge connects residues C76 and C84. N-linked (GlcNAc...) asparagine glycosylation is found at N95, N109, N170, and N201. Cysteines 219 and 242 form a disulfide. Residues 246–248 carry the WKS motif motif; it reads WKS. The helical transmembrane segment at 253 to 275 threads the bilayer; sequence TLIIVGAVVFLVTVFIILLTISL. A lipid anchor (S-palmitoyl cysteine) is attached at C276. The Cytoplasmic portion of the chain corresponds to 276 to 295; it reads CKRRKNRAGQKRKNTPSRLA.

Belongs to the tissue factor family. In terms of assembly, interacts with HSPE; the interaction, inhibited by heparin, promotes the generation of activated factor X and activates coagulation in the presence of activated factor VII.

It localises to the membrane. In terms of biological role, initiates blood coagulation by forming a complex with circulating factor VII or VIIa. The [TF:VIIa] complex activates factors IX or X by specific limited proteolysis. TF plays a role in normal hemostasis by initiating the cell-surface assembly and propagation of the coagulation protease cascade. The sequence is that of Tissue factor (F3) from Rattus norvegicus (Rat).